Reading from the N-terminus, the 313-residue chain is 2,3-dihydroxyphenylpropionate/2,3-dihydroxicinnamic acid 1,2-dioxygenase (313 aa).

H115 (proton donor) is an active-site residue. H179 functions as the Proton acceptor in the catalytic mechanism.

It belongs to the LigB/MhpB extradiol dioxygenase family. As to quaternary structure, homotetramer. It depends on Fe(2+) as a cofactor.

It catalyses the reaction 3-(2,3-dihydroxyphenyl)propanoate + O2 = (2Z,4E)-2-hydroxy-6-oxonona-2,4-dienedioate + H(+). The catalysed reaction is (2E)-3-(2,3-dihydroxyphenyl)prop-2-enoate + O2 = (2Z,4E,7E)-2-hydroxy-6-oxonona-2,4,7-trienedioate + H(+). It participates in aromatic compound metabolism; 3-phenylpropanoate degradation. Functionally, catalyzes the non-heme iron(II)-dependent oxidative cleavage of 2,3-dihydroxyphenylpropionic acid and 2,3-dihydroxicinnamic acid into 2-hydroxy-6-ketononadienedioate and 2-hydroxy-6-ketononatrienedioate, respectively. This chain is 2,3-dihydroxyphenylpropionate/2,3-dihydroxicinnamic acid 1,2-dioxygenase, found in Xanthobacter autotrophicus (strain ATCC BAA-1158 / Py2).